The sequence spans 237 residues: Phosphoadenosine 5'-phosphosulfate reductase (237 aa).

Catalysis depends on Cys231, which acts as the Nucleophile; cysteine thiosulfonate intermediate.

It belongs to the PAPS reductase family. CysH subfamily.

Its subcellular location is the cytoplasm. The enzyme catalyses [thioredoxin]-disulfide + sulfite + adenosine 3',5'-bisphosphate + 2 H(+) = [thioredoxin]-dithiol + 3'-phosphoadenylyl sulfate. It participates in sulfur metabolism; hydrogen sulfide biosynthesis; sulfite from sulfate: step 3/3. In terms of biological role, catalyzes the formation of sulfite from phosphoadenosine 5'-phosphosulfate (PAPS) using thioredoxin as an electron donor. This chain is Phosphoadenosine 5'-phosphosulfate reductase, found in Xylella fastidiosa (strain M12).